Consider the following 199-residue polypeptide: NAD(P)H dehydrogenase (quinone) (199 aa).

The Flavodoxin-like domain maps to 4–190 (MLVLYYSAYG…DGARFQGRRV (187 aa)). FMN-binding positions include 10-15 (SAYGHM) and 78-80 (TRY). Tyr-12 contacts NAD(+). Trp-98 is a substrate binding site. FMN is bound by residues 113 to 119 (STATQYG) and His-134. The disordered stretch occupies residues 161–181 (YGMTTTADGDGSRQPSAQELD). Residues 163–177 (MTTTADGDGSRQPSA) are compositionally biased toward polar residues.

It belongs to the WrbA family. Requires FMN as cofactor.

The catalysed reaction is a quinone + NADH + H(+) = a quinol + NAD(+). The enzyme catalyses a quinone + NADPH + H(+) = a quinol + NADP(+). The sequence is that of NAD(P)H dehydrogenase (quinone) from Brucella canis (strain ATCC 23365 / NCTC 10854 / RM-666).